We begin with the raw amino-acid sequence, 163 residues long: Troponin C (163 aa).

The residue at position 1 (Ser1) is an N-acetylserine. EF-hand domains lie at 14-49, 50-85, 90-125, and 127-162; these read EQISEFKMAFDMFDEDGGGDISTKELGTIMKRLGMS, ISREELQQMIDEVDEDASGTIDFEEFLEMMARAMQD, IPDDELRAAFRVLDKNGDGFIDKDEFRALASECAGD, and LTDDELLEFMMDYDGNRDGRFDYEEWKEIIQELKVR. Lys20 carries the post-translational modification N6,N6-dimethyllysine; alternate. Lys20 carries the post-translational modification N6-methyllysine; alternate. Residues Asp27, Asp29, Asp33, Glu38, Asp63, Asp65, Ser67, Thr69, Glu74, Asp103, Asn105, Asp107, and Glu114 each coordinate Ca(2+).

The protein belongs to the troponin C family.

In terms of biological role, troponin is the central regulatory protein of striated muscle contraction. Tn consists of three components: Tn-I which is the inhibitor of actomyosin ATPase, Tn-T which contains the binding site for tropomyosin and Tn-C. The binding of calcium to Tn-C abolishes the inhibitory action of Tn on actin filaments. In Branchiostoma lanceolatum (Common lancelet), this protein is Troponin C.